The following is a 362-amino-acid chain: DLA class I histocompatibility antigen, A9/A9 alpha chain (362 aa).

A signal peptide spans 1-24 (MEVVMPRALLVLLSAALALTPTRA). The interval 25-114 (GSHSLRYFYT…LRGYYNQSEA (90 aa)) is alpha-1. The Extracellular segment spans residues 25–306 (GSHSLRYFYT…RRWEPSPLST (282 aa)). Residue N110 is glycosylated (N-linked (GlcNAc...) asparagine). An alpha-2 region spans residues 115 to 207 (GSHTRQTMYG…EMGKETLLRA (93 aa)). Disulfide bonds link C125-C189 and C228-C284. Positions 208 to 299 (DPPSTRVTHH…GLPEPITRRW (92 aa)) are alpha-3. An Ig-like C1-type domain is found at 210-296 (PSTRVTHHPV…QHEGLPEPIT (87 aa)). The interval 300 to 306 (EPSPLST) is connecting peptide. Residues 307–329 (IVIVSIAALVLLVVAGVIGAVIW) traverse the membrane as a helical segment. The Cytoplasmic portion of the chain corresponds to 330–362 (RKQRSGGKGPGYSHAARDDSAQGSDVSLTAPRV). The segment at 333 to 362 (RSGGKGPGYSHAARDDSAQGSDVSLTAPRV) is disordered.

The protein belongs to the MHC class I family. As to quaternary structure, heterodimer of an alpha chain and a beta chain (beta-2-microglobulin).

It localises to the membrane. Its function is as follows. Involved in the presentation of foreign antigens to the immune system. The polypeptide is DLA class I histocompatibility antigen, A9/A9 alpha chain (Canis lupus familiaris (Dog)).